Here is a 62-residue protein sequence, read N- to C-terminus: Sperm protamine P1 (62 aa).

The tract at residues 1–62 is disordered; that stretch reads MARYRRHSRS…RYSRRGRRRY (62 aa).

Belongs to the protamine P1 family. As to expression, testis.

It localises to the nucleus. The protein resides in the chromosome. In terms of biological role, protamines substitute for histones in the chromatin of sperm during the haploid phase of spermatogenesis. They compact sperm DNA into a highly condensed, stable and inactive complex. The sequence is that of Sperm protamine P1 (PRM1) from Antechinomys laniger (Eastern jerboa marsupial).